Consider the following 542-residue polypeptide: Homeobox protein ceh-18 (542 aa).

Positions 243–252 are enriched in polar residues; sequence NTPTQPTASL. A disordered region spans residues 243–264; that stretch reads NTPTQPTASLTPKKAENRPPVV. Residues 290 to 364 form the POU-specific domain; sequence DDRIDMNELE…LLKEWLADVE (75 aa). The segment at residues 421–480 is a DNA-binding region (homeobox); it reads RRRKRTNLDMNQRNALDTFFALNPRPDHDKMTDIANSLELDRDVVRVWFCNRRQKMRRVD. Positions 514-542 are disordered; the sequence is LASCQASNDDSDGTSGSPDAPSNDGCSDL. Over residues 517–530 the composition is skewed to polar residues; the sequence is CQASNDDSDGTSGS.

Belongs to the POU transcription factor family. As to quaternary structure, interacts with akir-1. As to expression, expressed in the gonadal sheath cells that signal the oocyte, but not in the oocyte.

It is found in the nucleus. In terms of biological role, directs gonadal sheath cell differentiation and function. Also directs gonad migration and plays a role in specifying the differentiated phenotypes of epidermal cells during postembryonic development. Plays a role in oogenesis, regulating a sheath cell signal that causes oocytes to maintain diakinesis arrest during meiosis. Negatively regulates oocyte maturation, ovulation and MAPK activation in oocytes when sperm are not available for fertilization. May be recruited by akir-1 to the promoter regions of antimicrobial peptide genes to control gene expression in response to fungal infection. The chain is Homeobox protein ceh-18 from Caenorhabditis elegans.